The following is a 200-amino-acid chain: Large ribosomal subunit protein uL4 (200 aa).

A disordered region spans residues 38–68 (GRQGSKQQKTRSDVRGGGKRPWRQKGTGRAR). Residues 54–65 (GGKRPWRQKGTG) are compositionally biased toward basic residues.

This sequence belongs to the universal ribosomal protein uL4 family. Part of the 50S ribosomal subunit.

Functionally, one of the primary rRNA binding proteins, this protein initially binds near the 5'-end of the 23S rRNA. It is important during the early stages of 50S assembly. It makes multiple contacts with different domains of the 23S rRNA in the assembled 50S subunit and ribosome. Its function is as follows. Forms part of the polypeptide exit tunnel. The polypeptide is Large ribosomal subunit protein uL4 (Pseudomonas syringae pv. tomato (strain ATCC BAA-871 / DC3000)).